The chain runs to 263 residues: Eukaryotic translation initiation factor 3 subunit J-B (263 aa).

Acidic residues-rich tracts occupy residues 1 to 13 and 30 to 50; these read MADS…DNFE and EGED…EEKE. 2 disordered regions span residues 1–75 and 214–235; these read MADS…DKIK and KQKQ…VPGG. Positions 30 to 127 form a coiled coil; it reads EGEDEEEDVK…EADMELAREA (98 aa). Over residues 51–75 the composition is skewed to basic and acidic residues; sequence EEKKVEQKIAEVKPPEKKKLSDKIK.

The protein belongs to the eIF-3 subunit J family. In terms of assembly, component of the eukaryotic translation initiation factor 3 (eIF-3) complex, which is composed of 13 subunits: eif3a, eif3b, eif3c, eif3d, eif3e, eif3f, eif3g, eif3h, eif3i, eif3j, eif3k, eif3l and eif3m.

It is found in the cytoplasm. Component of the eukaryotic translation initiation factor 3 (eIF-3) complex, which is involved in protein synthesis of a specialized repertoire of mRNAs and, together with other initiation factors, stimulates binding of mRNA and methionyl-tRNAi to the 40S ribosome. The eIF-3 complex specifically targets and initiates translation of a subset of mRNAs involved in cell proliferation. The sequence is that of Eukaryotic translation initiation factor 3 subunit J-B (eif3jb) from Danio rerio (Zebrafish).